Here is an 887-residue protein sequence, read N- to C-terminus: Leucine--tRNA ligase (887 aa).

The short motif at proline 48–histidine 58 is the 'HIGH' region element. A 'KMSKS' region motif is present at residues threonine 644–serine 648. Lysine 647 contributes to the ATP binding site.

Belongs to the class-I aminoacyl-tRNA synthetase family.

Its subcellular location is the cytoplasm. It catalyses the reaction tRNA(Leu) + L-leucine + ATP = L-leucyl-tRNA(Leu) + AMP + diphosphate. This is Leucine--tRNA ligase from Leptothrix cholodnii (strain ATCC 51168 / LMG 8142 / SP-6) (Leptothrix discophora (strain SP-6)).